The chain runs to 393 residues: NAD(P)H-quinone oxidoreductase subunit H, chloroplastic (393 aa).

The protein belongs to the complex I 49 kDa subunit family. As to quaternary structure, NDH is composed of at least 16 different subunits, 5 of which are encoded in the nucleus.

Its subcellular location is the plastid. The protein resides in the chloroplast thylakoid membrane. It catalyses the reaction a plastoquinone + NADH + (n+1) H(+)(in) = a plastoquinol + NAD(+) + n H(+)(out). The catalysed reaction is a plastoquinone + NADPH + (n+1) H(+)(in) = a plastoquinol + NADP(+) + n H(+)(out). Its function is as follows. NDH shuttles electrons from NAD(P)H:plastoquinone, via FMN and iron-sulfur (Fe-S) centers, to quinones in the photosynthetic chain and possibly in a chloroplast respiratory chain. The immediate electron acceptor for the enzyme in this species is believed to be plastoquinone. Couples the redox reaction to proton translocation, and thus conserves the redox energy in a proton gradient. The protein is NAD(P)H-quinone oxidoreductase subunit H, chloroplastic of Hordeum vulgare (Barley).